We begin with the raw amino-acid sequence, 118 residues long: Secreted RxLR effector protein 143 (118 aa).

The signal sequence occupies residues 1 to 18 (MRHCAFLFRLFLIGYSCS). Basic and acidic residues predominate over residues 35 to 65 (DELPRAEQWDSDGKRILQADDPEHIPTEERG). Positions 35 to 66 (DELPRAEQWDSDGKRILQADDPEHIPTEERGI) are disordered. The short motif at 49-64 (RILQADDPEHIPTEER) is the RxLR-dEER element.

Belongs to the RxLR effector family.

The protein localises to the secreted. It is found in the host cell membrane. In terms of biological role, secreted effector that completely suppresses the host cell death induced by cell death-inducing proteins. This Plasmopara viticola (Downy mildew of grapevine) protein is Secreted RxLR effector protein 143.